Consider the following 273-residue polypeptide: MHTHTIFVISDGTGITAETFGTAIMAQFDTKSRLVRIPFVDTMDKVHQAVRQINHVAESESHKPIVFTTLVNQDMLDLIESQCKGKVFDMFGTFVRPLELELGQKSLHRVGRFADISESKEYLERMEAINYTLAHDDGQTHQDLTGADVILVGVSRSGKTPTSLYLAMQFGLKVANYPLIPEDFERKQLPPALVPSRKKLFGLTIDPQRLSSIRNERRPDSKYASLVNCRYEVAEAESMMRRSGIPWLSSTTKSIEEIATTILQEVLPQHLGH.

153–160 contacts ADP; that stretch reads GVSRSGKT.

Belongs to the pyruvate, phosphate/water dikinase regulatory protein family. PSRP subfamily.

It catalyses the reaction [pyruvate, water dikinase] + ADP = [pyruvate, water dikinase]-phosphate + AMP + H(+). The enzyme catalyses [pyruvate, water dikinase]-phosphate + phosphate + H(+) = [pyruvate, water dikinase] + diphosphate. In terms of biological role, bifunctional serine/threonine kinase and phosphorylase involved in the regulation of the phosphoenolpyruvate synthase (PEPS) by catalyzing its phosphorylation/dephosphorylation. The chain is Putative phosphoenolpyruvate synthase regulatory protein from Delftia acidovorans (strain DSM 14801 / SPH-1).